The chain runs to 21 residues: Ocellatin-2 (21 aa).

I21 carries the isoleucine amide modification.

Expressed by the skin dorsal glands.

The protein localises to the secreted. Functionally, has hemolytic activity against human erythrocytes and antibacterial activity against the Gram-negative bacterium E.coli. The sequence is that of Ocellatin-2 from Leptodactylus ocellatus (Argus frog).